The primary structure comprises 274 residues: Diaminopimelate epimerase (274 aa).

Positions 11, 44, and 64 each coordinate substrate. The Proton donor role is filled by C73. Substrate contacts are provided by residues 74–75, N157, N190, and 208–209; these read GN and ER. The active-site Proton acceptor is C217. Residue 218-219 participates in substrate binding; the sequence is GS.

This sequence belongs to the diaminopimelate epimerase family. Homodimer.

The protein resides in the cytoplasm. It carries out the reaction (2S,6S)-2,6-diaminopimelate = meso-2,6-diaminopimelate. Its pathway is amino-acid biosynthesis; L-lysine biosynthesis via DAP pathway; DL-2,6-diaminopimelate from LL-2,6-diaminopimelate: step 1/1. Functionally, catalyzes the stereoinversion of LL-2,6-diaminopimelate (L,L-DAP) to meso-diaminopimelate (meso-DAP), a precursor of L-lysine and an essential component of the bacterial peptidoglycan. This Proteus mirabilis (strain HI4320) protein is Diaminopimelate epimerase.